The primary structure comprises 133 residues: Small ribosomal subunit protein uS8 (133 aa).

The protein belongs to the universal ribosomal protein uS8 family. In terms of assembly, part of the 30S ribosomal subunit. Contacts proteins S5 and S12.

In terms of biological role, one of the primary rRNA binding proteins, it binds directly to 16S rRNA central domain where it helps coordinate assembly of the platform of the 30S subunit. The sequence is that of Small ribosomal subunit protein uS8 from Synechococcus sp. (strain WH7803).